Reading from the N-terminus, the 249-residue chain is ATP synthase subunit a, chloroplastic (249 aa).

5 helical membrane passes run Gln40 to Ile60, Val97 to Leu117, Ile136 to Ser156, Leu201 to Leu221, and Gly222 to Gly242.

This sequence belongs to the ATPase A chain family. F-type ATPases have 2 components, CF(1) - the catalytic core - and CF(0) - the membrane proton channel. CF(1) has five subunits: alpha(3), beta(3), gamma(1), delta(1), epsilon(1). CF(0) has four main subunits: a, b, b' and c.

The protein resides in the plastid. The protein localises to the chloroplast thylakoid membrane. In terms of biological role, key component of the proton channel; it plays a direct role in the translocation of protons across the membrane. The protein is ATP synthase subunit a, chloroplastic of Lepidium virginicum (Virginia pepperweed).